The sequence spans 180 residues: Large ribosomal subunit protein uL15 (180 aa).

Positions 1–62 are disordered; it reads MKKERLEQAS…KTAGRGSKGQ (62 aa).

This sequence belongs to the universal ribosomal protein uL15 family. In terms of assembly, part of the 50S ribosomal subunit.

Its function is as follows. Binds to the 23S rRNA. In Leptospira interrogans serogroup Icterohaemorrhagiae serovar copenhageni (strain Fiocruz L1-130), this protein is Large ribosomal subunit protein uL15.